The chain runs to 449 residues: POU domain, class 3, transcription factor 1 (449 aa).

Disordered stretches follow at residues 1 to 22 (MATT…TGPL), 76 to 108 (GGGG…GGGG), 132 to 152 (AHHL…HQPQ), 184 to 251 (GLHH…PSSD), and 393 to 449 (KRMT…GSVQ). Gly residues-rich tracts occupy residues 11 to 20 (GPGGGAGGTG) and 93 to 108 (AGGG…GGGG). Positions 132–143 (AHHLGPAMSPSP) are enriched in low complexity. A compositionally biased stretch (basic and acidic residues) spans 188 to 197 (ALHEDGHEAQ). Low complexity predominate over residues 218–230 (AGGLHAAAAHLHP). The POU-specific domain maps to 245-319 (EDAPSSDDLE…LLNKWLEETD (75 aa)). The homeobox DNA-binding region spans 337–396 (KRKKRTSIEVGVKGALESHFLKCPKPSAHEITGLADSLQLEKEVVRVWFCNRRQKEKRMT). Residues 425-434 (PSAPPPPPPA) show a composition bias toward pro residues.

It belongs to the POU transcription factor family. Class-3 subfamily.

The protein resides in the nucleus. Functionally, transcription factor that binds to the octamer motif (5'-ATTTGCAT-3'). Acts as a transcriptional activator when binding cooperatively with SOX4, SOX11, or SOX12 to gene promoters. Acts as a transcriptional repressor of myelin-specific genes. The chain is POU domain, class 3, transcription factor 1 (Pou3f1) from Mus musculus (Mouse).